Consider the following 203-residue polypeptide: N-(5'-phosphoribosyl)anthranilate isomerase (203 aa).

Belongs to the TrpF family.

It carries out the reaction N-(5-phospho-beta-D-ribosyl)anthranilate = 1-(2-carboxyphenylamino)-1-deoxy-D-ribulose 5-phosphate. It functions in the pathway amino-acid biosynthesis; L-tryptophan biosynthesis; L-tryptophan from chorismate: step 3/5. This is N-(5'-phosphoribosyl)anthranilate isomerase from Thermoanaerobacter sp. (strain X514).